A 526-amino-acid polypeptide reads, in one-letter code: Arp2/3 complex-activating protein rickA (526 aa).

The segment at 305–356 is disordered; sequence TTSSIAKPLENNVTPPPPLTKNNIPPPPPPPPLSKNNILPPPPPPMPTMAPA. Residues 318-352 are compositionally biased toward pro residues; that stretch reads TPPPPLTKNNIPPPPPPPPLSKNNILPPPPPPMPT. 2 consecutive WH2 domains span residues 383 to 400 and 410 to 427; these read DTSDLMREIAGPKNLRKV and SRDLLLQSIRGEHKLRKV. Disordered stretches follow at residues 425–452 and 464–526; these read RKVEFDPNTGKPVAHSHSKPAQNVSKPN and MEMS…FVRS. Residues 448–484 form a central and acidic domains region; it reads VSKPNGVASILARRVAMEMSDSSSSSGSESDSGNWSD. The segment covering 464-480 has biased composition (low complexity); sequence MEMSDSSSSSGSESDSG. Polar residues-rich tracts occupy residues 481–491 and 506–526; these read NWSDASVNSNK and TTHAQKILSNRSSQKPSFVRS.

Homodimer.

It is found in the cell surface. Functionally, recruits and activates the Arp2/3 complex, which in turn leads to actin polymerization, promoting Rickettsia motility during infection. In Rickettsia felis (strain ATCC VR-1525 / URRWXCal2) (Rickettsia azadi), this protein is Arp2/3 complex-activating protein rickA (rickA).